The chain runs to 180 residues: Ribosome maturation factor RimM (180 aa).

The 73-residue stretch at 108-180 (PDEYYWVDLE…LIVVDWDPDF (73 aa)) folds into the PRC barrel domain.

It belongs to the RimM family. As to quaternary structure, binds ribosomal protein uS19.

It localises to the cytoplasm. An accessory protein needed during the final step in the assembly of 30S ribosomal subunit, possibly for assembly of the head region. Essential for efficient processing of 16S rRNA. May be needed both before and after RbfA during the maturation of 16S rRNA. It has affinity for free ribosomal 30S subunits but not for 70S ribosomes. The protein is Ribosome maturation factor RimM of Xanthomonas euvesicatoria pv. vesicatoria (strain 85-10) (Xanthomonas campestris pv. vesicatoria).